The following is a 198-amino-acid chain: ATP-dependent Clp protease proteolytic subunit (198 aa).

Ser98 (nucleophile) is an active-site residue. The active site involves His123.

It belongs to the peptidase S14 family. Fourteen ClpP subunits assemble into 2 heptameric rings which stack back to back to give a disk-like structure with a central cavity, resembling the structure of eukaryotic proteasomes.

The protein resides in the cytoplasm. The enzyme catalyses Hydrolysis of proteins to small peptides in the presence of ATP and magnesium. alpha-casein is the usual test substrate. In the absence of ATP, only oligopeptides shorter than five residues are hydrolyzed (such as succinyl-Leu-Tyr-|-NHMec, and Leu-Tyr-Leu-|-Tyr-Trp, in which cleavage of the -Tyr-|-Leu- and -Tyr-|-Trp bonds also occurs).. In terms of biological role, cleaves peptides in various proteins in a process that requires ATP hydrolysis. Has a chymotrypsin-like activity. Plays a major role in the degradation of misfolded proteins. The protein is ATP-dependent Clp protease proteolytic subunit of Halothermothrix orenii (strain H 168 / OCM 544 / DSM 9562).